A 193-amino-acid chain; its full sequence is dCTP deaminase (193 aa).

DCTP-binding positions include 110–115, aspartate 128, 136–138, tyrosine 171, lysine 178, and glutamine 182; these read RSSLAR and VLE. Catalysis depends on glutamate 138, which acts as the Proton donor/acceptor. Residues 169-193 form a disordered region; it reads RPYNSRQDAKYKGQQGAVASRIDKD.

Belongs to the dCTP deaminase family. Homotrimer.

The catalysed reaction is dCTP + H2O + H(+) = dUTP + NH4(+). Its pathway is pyrimidine metabolism; dUMP biosynthesis; dUMP from dCTP (dUTP route): step 1/2. In terms of biological role, catalyzes the deamination of dCTP to dUTP. This chain is dCTP deaminase, found in Erwinia tasmaniensis (strain DSM 17950 / CFBP 7177 / CIP 109463 / NCPPB 4357 / Et1/99).